The chain runs to 359 residues: Protein disulfide-isomerase tigA (359 aa).

An N-terminal signal peptide occupies residues 1–19; sequence MVRLSNLVSCLGLASAVTA. 2 consecutive Thioredoxin domains span residues 20–129 and 131–250; these read AVVD…EKTG and KPRG…EKTG. Active-site nucleophile residues include Cys49, Cys52, Cys169, and Cys172. Disulfide bonds link Cys49/Cys52 and Cys169/Cys172. The Prevents secretion from ER signature appears at 356 to 359; it reads KDEL.

This sequence belongs to the protein disulfide isomerase family.

It is found in the endoplasmic reticulum lumen. The catalysed reaction is Catalyzes the rearrangement of -S-S- bonds in proteins.. This Aspergillus niger protein is Protein disulfide-isomerase tigA (tigA).